The chain runs to 601 residues: Glutathione-regulated potassium-efflux system protein KefB (601 aa).

The next 13 membrane-spanning stretches (helical) occupy residues Ala-4–Ala-24, Ile-29–Phe-49, Glu-55–Leu-75, Ile-87–Met-107, Phe-111–Ala-131, Val-152–Gly-172, His-177–Gly-197, Phe-207–Ser-227, Leu-230–Leu-250, Ala-262–Leu-282, Leu-284–Ile-304, Met-324–Ala-344, and Ala-356–Ile-376. The RCK N-terminal domain maps to Lys-400–Thr-519.

This sequence belongs to the monovalent cation:proton antiporter 2 (CPA2) transporter (TC 2.A.37) family. KefB subfamily. As to quaternary structure, interacts with the regulatory subunit KefG.

The protein localises to the cell inner membrane. Functionally, pore-forming subunit of a potassium efflux system that confers protection against electrophiles. Catalyzes K(+)/H(+) antiport. The polypeptide is Glutathione-regulated potassium-efflux system protein KefB (Salmonella paratyphi C (strain RKS4594)).